Reading from the N-terminus, the 269-residue chain is Elongation factor Ts (269 aa).

Residues 76-79 (TDFV) are involved in Mg(2+) ion dislocation from EF-Tu.

This sequence belongs to the EF-Ts family.

It is found in the cytoplasm. Functionally, associates with the EF-Tu.GDP complex and induces the exchange of GDP to GTP. It remains bound to the aminoacyl-tRNA.EF-Tu.GTP complex up to the GTP hydrolysis stage on the ribosome. In Deinococcus geothermalis (strain DSM 11300 / CIP 105573 / AG-3a), this protein is Elongation factor Ts.